Reading from the N-terminus, the 539-residue chain is CTP synthase (539 aa).

The amidoligase domain stretch occupies residues Met-1–Ile-267. Residue Ser-13 coordinates CTP. Residue Ser-13 participates in UTP binding. Position 14–19 (Ser-14–Ile-19) interacts with ATP. Tyr-54 serves as a coordination point for L-glutamine. Position 71 (Asp-71) interacts with ATP. Mg(2+)-binding residues include Asp-71 and Glu-141. CTP contacts are provided by residues Asp-148–Glu-150, Lys-188–Gln-193, and Lys-224. Residues Lys-188–Gln-193 and Lys-224 each bind UTP. The Glutamine amidotransferase type-1 domain maps to Lys-294 to Asp-537. L-glutamine is bound at residue Gly-356. The active-site Nucleophile; for glutamine hydrolysis is the Cys-383. L-glutamine-binding positions include Leu-384–Gln-387, Glu-407, and Arg-465. Catalysis depends on residues His-510 and Glu-512.

It belongs to the CTP synthase family. Homotetramer.

The enzyme catalyses UTP + L-glutamine + ATP + H2O = CTP + L-glutamate + ADP + phosphate + 2 H(+). It catalyses the reaction L-glutamine + H2O = L-glutamate + NH4(+). It carries out the reaction UTP + NH4(+) + ATP = CTP + ADP + phosphate + 2 H(+). It participates in pyrimidine metabolism; CTP biosynthesis via de novo pathway; CTP from UDP: step 2/2. Allosterically activated by GTP, when glutamine is the substrate; GTP has no effect on the reaction when ammonia is the substrate. The allosteric effector GTP functions by stabilizing the protein conformation that binds the tetrahedral intermediate(s) formed during glutamine hydrolysis. Inhibited by the product CTP, via allosteric rather than competitive inhibition. Catalyzes the ATP-dependent amination of UTP to CTP with either L-glutamine or ammonia as the source of nitrogen. Regulates intracellular CTP levels through interactions with the four ribonucleotide triphosphates. The chain is CTP synthase from Lactobacillus delbrueckii subsp. bulgaricus (strain ATCC 11842 / DSM 20081 / BCRC 10696 / JCM 1002 / NBRC 13953 / NCIMB 11778 / NCTC 12712 / WDCM 00102 / Lb 14).